The sequence spans 26 residues: Histone H2B.1, sperm (26 aa).

A disordered region spans residues 1-26 (MPSQKSPTKRSPTKRSPQKGGKGAKR). Short sequence motifs (SPKK motif) lie at residues 6–9 (SPTK), 11–14 (SPTK), and 16–19 (SPQK). Positions 7 to 26 (PTKRSPTKRSPQKGGKGAKR) are enriched in basic residues. 2 positions are modified to phosphoserine: Ser-11 and Ser-16.

The protein belongs to the histone H2B family. As to quaternary structure, the nucleosome is a histone octamer containing two molecules each of H2A, H2B, H3 and H4 assembled in one H3-H4 heterotetramer and two H2A-H2B heterodimers. The octamer wraps approximately 147 bp of DNA. In terms of processing, monoubiquitination gives a specific tag for epigenetic transcriptional activation and is also prerequisite for histone H3 'Lys-4' and 'Lys-79' methylation. Phosphorylated on SPKK motifs 2 and 3; which may regulate DNA binding. Dephosphorylated during maturation of spermatids to mature sperm and rephosphorylated at fertilization.

The protein resides in the nucleus. Its subcellular location is the chromosome. Functionally, core component of nucleosome. Nucleosomes wrap and compact DNA into chromatin, limiting DNA accessibility to the cellular machineries which require DNA as a template. Histones thereby play a central role in transcription regulation, DNA repair, DNA replication and chromosomal stability. DNA accessibility is regulated via a complex set of post-translational modifications of histones, also called histone code, and nucleosome remodeling. This Echinus esculentus (Sea urchin) protein is Histone H2B.1, sperm.